Reading from the N-terminus, the 76-residue chain is Exodeoxyribonuclease 7 small subunit (76 aa).

This sequence belongs to the XseB family. In terms of assembly, heterooligomer composed of large and small subunits.

It localises to the cytoplasm. It catalyses the reaction Exonucleolytic cleavage in either 5'- to 3'- or 3'- to 5'-direction to yield nucleoside 5'-phosphates.. Bidirectionally degrades single-stranded DNA into large acid-insoluble oligonucleotides, which are then degraded further into small acid-soluble oligonucleotides. This is Exodeoxyribonuclease 7 small subunit from Bacillus mycoides (strain KBAB4) (Bacillus weihenstephanensis).